We begin with the raw amino-acid sequence, 124 residues long: Replication restart protein PriB (124 aa).

The region spanning 12 to 112 is the SSB domain; it reads IDNCLTLTGI…LHTEQIEFID (101 aa).

Belongs to the PriB family. Homodimer. Interacts with PriA and DnaT. Component of the replication restart primosome. Primosome assembly occurs via a 'hand-off' mechanism. PriA binds to replication forks, subsequently PriB then DnaT bind; DnaT then displaces ssDNA to generate the helicase loading substrate.

Functionally, involved in the restart of stalled replication forks, which reloads the replicative helicase on sites other than the origin of replication; the PriA-PriB pathway is the major replication restart pathway. During primosome assembly it facilitates complex formation between PriA and DnaT on DNA; stabilizes PriA on DNA. Stimulates the DNA unwinding activity of PriA helicase. This is Replication restart protein PriB from Haemophilus ducreyi (strain 35000HP / ATCC 700724).